The chain runs to 620 residues: Translocator protein BipB (620 aa).

Residues 58–95 form a disordered region; that stretch reads QCDAQPAAHDARLDDKPALRAPQERDAPPLGASDTGSR. A compositionally biased stretch (basic and acidic residues) spans 66 to 84; sequence HDARLDDKPALRAPQERDA. Residues 309-339 are a coiled coil; that stretch reads EMQAKREAELQKKSDEYQAQVKKAEEMQKTM. The next 3 helical transmembrane spans lie at 355–375, 401–421, and 430–450; these read FAAA…GLAL, AILK…LVAC, and LAGA…AAFV.

This sequence belongs to the SctE/SipB/YopB family.

The protein localises to the secreted. It localises to the host membrane. Its function is as follows. Plays a role in the bacterium-induced formation of multinucleated giant cell (MNGC), which is formed after host cell fusion, as well as in the intercellular spreading of bacteria and in the induction of apoptosis in macrophages. May act in concert with other effector proteins to induce fusion of host cell membranes. The polypeptide is Translocator protein BipB (bipB) (Burkholderia pseudomallei (strain 1106a)).